The following is a 310-amino-acid chain: MIKIYLDEADQSHLTSISKNAATKPEWLRVKAPQFERIGNTASLLSDLKLNTVCQEASCPNIGECFASGTATFLIMGPACTRACPYCDINFDRSKRDLDPTEPHRLAEAVSRMNLKHVVITSVNRDDLDDGGASQFFQCVSEVRKKSPETTIELLIPDLCGNWQALELVLDSKPNVLNHNIETVKSLYRKVRPQGNYQRTLDLLKRTKEYFPSVYTKSGFMLGLGESDDEVLNLLSDLKNHFVDIVTIGQYLSPGPKHLPVQRFVSPPKFTYFKLFGEDNLGFMQVVSSPLTRSSYHAEEIQKLMKKYPR.

Positions 54, 59, 65, 80, 84, 87, and 295 each coordinate [4Fe-4S] cluster. Residues 66–284 form the Radical SAM core domain; it reads FASGTATFLI…LFGEDNLGFM (219 aa).

It belongs to the radical SAM superfamily. Lipoyl synthase family. Requires [4Fe-4S] cluster as cofactor.

The protein resides in the cytoplasm. The catalysed reaction is [[Fe-S] cluster scaffold protein carrying a second [4Fe-4S](2+) cluster] + N(6)-octanoyl-L-lysyl-[protein] + 2 oxidized [2Fe-2S]-[ferredoxin] + 2 S-adenosyl-L-methionine + 4 H(+) = [[Fe-S] cluster scaffold protein] + N(6)-[(R)-dihydrolipoyl]-L-lysyl-[protein] + 4 Fe(3+) + 2 hydrogen sulfide + 2 5'-deoxyadenosine + 2 L-methionine + 2 reduced [2Fe-2S]-[ferredoxin]. It participates in protein modification; protein lipoylation via endogenous pathway; protein N(6)-(lipoyl)lysine from octanoyl-[acyl-carrier-protein]: step 2/2. Functionally, catalyzes the radical-mediated insertion of two sulfur atoms into the C-6 and C-8 positions of the octanoyl moiety bound to the lipoyl domains of lipoate-dependent enzymes, thereby converting the octanoylated domains into lipoylated derivatives. This Prochlorococcus marinus (strain MIT 9215) protein is Lipoyl synthase.